A 348-amino-acid polypeptide reads, in one-letter code: Organic solute transporter alpha-like protein 3 (348 aa).

Over 1–49 the chain is Extracellular; the sequence is MAKEHGAMRSVLNLIGSVMLPQDTSNCSDRHDTPSAPEFLSHLQPFQTV. The N-linked (GlcNAc...) asparagine glycan is linked to Asn26. Residues 50–70 traverse the membrane as a helical segment; that stretch reads LLSIASFSTTIVLCLSLIHWF. The Cytoplasmic portion of the chain corresponds to 71–84; that stretch reads YVYKYVSIEKRRNK. The helical transmembrane segment at 85 to 105 threads the bilayer; the sequence is LYWLIAVFPVACSCSFIAMCV. The Extracellular segment spans residues 106–109; sequence PRTA. The chain crosses the membrane as a helical span at residues 110 to 130; that stretch reads VILTCIGVLYYLMCLFVIVSL. Topologically, residues 131–180 are cytoplasmic; that stretch reads ARHLFGGRESFSTCLQYDDRPIDFRSPPFCCIIPKLPTARSTEKNIRRLE. A helical transmembrane segment spans residues 181–201; sequence WCVLQAPIVRSIIIFLDVVAV. Topologically, residues 202 to 213 are extracellular; that stretch reads AEMREDATPYIR. Residues 214 to 234 traverse the membrane as a helical segment; the sequence is YSDMASLCSLLLAIFGVHTLA. Residues 235-240 are Cytoplasmic-facing; the sequence is RVTSNK. Residues 241 to 261 form a helical membrane-spanning segment; that stretch reads LSAYCFMSMFRLVDISLLFFS. Over 262–291 the chain is Extracellular; the sequence is AQQPMIFQNVLLRFNLISCGPLLNAQENAY. Residues 292 to 312 form a helical membrane-spanning segment; that stretch reads FVCNFIITCEMLLLSVLATWL. At 313–348 the chain is on the cytoplasmic side; it reads LAPRHNAMFDAYRPSMALSETTASLNETEQSMILDH.

This sequence belongs to the OST-alpha family.

The protein localises to the cell membrane. Probable transporter. The chain is Organic solute transporter alpha-like protein 3 (osta-3) from Caenorhabditis elegans.